A 419-amino-acid polypeptide reads, in one-letter code: 1,4-beta-D-glucan cellobiohydrolase CEL6B (419 aa).

The signal sequence occupies residues 1-47 (MGESFLLLQPASPALSPTPSSLLLGPTITMRADVLIAALATGALVAA). Residues tryptophan 111 and serine 113 each contribute to the substrate site. Active-site proton donor residues include aspartate 152 and aspartate 199. Substrate is bound at residue tryptophan 247. An N-linked (GlcNAc...) asparagine glycan is attached at asparagine 284. Asparagine 287 lines the substrate pocket. Asparagine 298 carries an N-linked (GlcNAc...) asparagine glycan. Tryptophan 347 contacts substrate. N-linked (GlcNAc...) asparagine glycosylation occurs at asparagine 364. Substrate contacts are provided by lysine 375 and glutamate 379.

The protein belongs to the glycosyl hydrolase 6 (cellulase B) family. In terms of processing, both N- and O-glycosylated.

Its subcellular location is the secreted. It catalyses the reaction Hydrolysis of (1-&gt;4)-beta-D-glucosidic linkages in cellulose and cellotetraose, releasing cellobiose from the non-reducing ends of the chains.. Exoglucanase that plays an important function in biomass degradation by catalyzing the hydrolysis of the non-reducing end beta-1,4-glucosidic linkages in cellulose and cellotetraose to release cellobiose. Hydrolyzes crystalline and amorphous cellulose but is inactive on hydroxyethyl cellulose, mannan, galactomannan, xyloglucan, arabinoxylan, arabinan, xylan, and pectin. The protein is 1,4-beta-D-glucan cellobiohydrolase CEL6B of Podospora anserina (strain S / ATCC MYA-4624 / DSM 980 / FGSC 10383) (Pleurage anserina).